Here is a 1315-residue protein sequence, read N- to C-terminus: ESX secretion system protein EccC (1315 aa).

The segment covering 1-11 (MSTVLVRRKER) has biased composition (basic residues). Residues 1 to 21 (MSTVLVRRKERRQPPQMPRGE) are disordered. At 1–40 (MSTVLVRRKERRQPPQMPRGEILLESPPELPEVVTNSFQN) the chain is on the cytoplasmic side. A helical membrane pass occupies residues 41 to 61 (VLMYLPMAAGSAAMVFTFLNH). Residues 62–64 (RNT) are Extracellular-facing. The chain crosses the membrane as a helical span at residues 65–85 (LQLVAGGMFALSMFGMMFGQL). The Cytoplasmic portion of the chain corresponds to 86 to 1315 (SQQSGERKTK…RLIQTAYRES (1230 aa)). 2 consecutive FtsK domains span residues 456 to 656 (GRPL…MESR) and 813 to 1004 (RDPY…YESE). 479-486 (GATGSGKS) contacts ATP. Glu593 is an active-site residue. A binds EsxB region spans residues 721–1315 (RPQVVEQPQP…RLIQTAYRES (595 aa)). ATP-binding positions include 834 to 839 (QTGKST), Thr1031, 1119 to 1124 (ECGKSN), Gln1293, and 1310 to 1311 (TA). A FtsK 3 domain is found at 1099 to 1282 (LSPVYLDFNT…MSGNKDEGIL (184 aa)).

In terms of assembly, the cytosolic domain can form homodimers. Binds EsxB, which leads to multimerization, however EsxA disassembles the multimers, possibly by making EccC-EsxA-EsxB trimers instead of EccC-EsxB-EsxB-EccC tetramers. Forms a complex with EsxA and EsxB, probably wholly mediated by EsxB.

It is found in the cell membrane. With respect to regulation, esxB binding to the third FtsK domain causes multimerization; a subsequent unknown step relieves the allosteric inhibition of linker 2 on FtsK domain 1, activating the ATPase activity; a mutant EsxB ('Ala-98') does not cause multimers to form. In terms of biological role, part of the ESX specialized secretion system, which exports proteins from the cell including EsxA (ESAT-6) and EsxB (CFP-10). Has weak intrinsic ATPase activity; probably only the first FtsK domain can hydrolyze ATP. Might be the translocase subunit. This Thermomonospora curvata (strain ATCC 19995 / DSM 43183 / JCM 3096 / KCTC 9072 / NBRC 15933 / NCIMB 10081 / Henssen B9) protein is ESX secretion system protein EccC.